A 271-amino-acid polypeptide reads, in one-letter code: Tryptophan synthase alpha chain (271 aa).

Residues E49 and D60 each act as proton acceptor in the active site.

The protein belongs to the TrpA family. As to quaternary structure, tetramer of two alpha and two beta chains.

The enzyme catalyses (1S,2R)-1-C-(indol-3-yl)glycerol 3-phosphate + L-serine = D-glyceraldehyde 3-phosphate + L-tryptophan + H2O. It functions in the pathway amino-acid biosynthesis; L-tryptophan biosynthesis; L-tryptophan from chorismate: step 5/5. The alpha subunit is responsible for the aldol cleavage of indoleglycerol phosphate to indole and glyceraldehyde 3-phosphate. The polypeptide is Tryptophan synthase alpha chain (Blochmanniella floridana).